The chain runs to 938 residues: Ubiquitin carboxyl-terminal hydrolase Usp2 (938 aa).

6 disordered regions span residues 1-53 (MMLD…KVGA), 91-117 (KVKTTLQPHRRSRAGEDSRNNNYNTSR), 130-254 (FNGN…ISTT), 273-297 (EQNQVQQQEEQPQPSSSKSASHRYP), 360-410 (LSGQ…NLQQ), and 500-610 (KDAT…EKSE). Residues 22-36 (STTKTSSVVATSASS) are compositionally biased toward low complexity. Low complexity-rich tracts occupy residues 137–158 (TTTNSTTINNTTSRNTTSNTSN), 167–177 (STTATATSTST), 198–227 (MNGHTNNNNNNTRNSSNINNGGNNNMQRQQ), and 275–289 (NQVQQQEEQPQPSSS). Positions 392–410 (ASRSNHGSQAGGSSSNLQQ) are enriched in polar residues. Low complexity-rich tracts occupy residues 502–555 (ATTA…TARS) and 574–583 (TSRSSIGTSS). Residues 592 to 610 (HNSDDGYKTASSSRDEKSE) show a composition bias toward basic and acidic residues. The USP domain occupies 613–938 (CGLRNIGNTC…SAYILFYERT (326 aa)). C622 acts as the Nucleophile in catalysis. Zn(2+) is bound by residues C765, C768, C814, and C817. The active-site Proton acceptor is the H895.

This sequence belongs to the peptidase C19 family. As to quaternary structure, interacts (via N-terminus) with imd (via N-terminus). Interacts with Rpt6.

The enzyme catalyses Thiol-dependent hydrolysis of ester, thioester, amide, peptide and isopeptide bonds formed by the C-terminal Gly of ubiquitin (a 76-residue protein attached to proteins as an intracellular targeting signal).. Its function is as follows. Hydrolase that deubiquitinates polyubiquitinated target proteins. Required for preventing the activation of the Toll signaling cascades under unchallenged conditions. Essential for bodily calcium homeostasis. In terms of biological role, required for preventing the activation of the immune deficiency (Imd) signaling cascade under unchallenged conditions. Regulates the Imd pathway by specifically removing 'Lys-48'-linked ubiquitin from imd. Also promotes imd degradation probably by binding to imd and enhancing its association with the proteasome. The sequence is that of Ubiquitin carboxyl-terminal hydrolase Usp2 from Drosophila melanogaster (Fruit fly).